Consider the following 236-residue polypeptide: Calcium-binding lectin RapA2 (236 aa).

The protein resides in the secreted. Its function is as follows. Interacts specifically in a calcium-dependent manner with the acidic exopolysaccharide (EPS) and capsular polysaccharide produced by R.leguminosarum. Could be involved in the development of the biofilm matrix made of EPS. The sequence is that of Calcium-binding lectin RapA2 from Rhizobium johnstonii (strain DSM 114642 / LMG 32736 / 3841) (Rhizobium leguminosarum bv. viciae).